Here is a 170-residue protein sequence, read N- to C-terminus: ATP synthase subunit b (170 aa).

A helical membrane pass occupies residues 15-37 (LNLFETNVLNWAVVVFGLYKFLP).

The protein belongs to the ATPase B chain family. As to quaternary structure, F-type ATPases have 2 components, F(1) - the catalytic core - and F(0) - the membrane proton channel. F(1) has five subunits: alpha(3), beta(3), gamma(1), delta(1), epsilon(1). F(0) has four main subunits: a(1), b(1), b'(1) and c(10-14). The alpha and beta chains form an alternating ring which encloses part of the gamma chain. F(1) is attached to F(0) by a central stalk formed by the gamma and epsilon chains, while a peripheral stalk is formed by the delta, b and b' chains.

The protein resides in the cellular thylakoid membrane. In terms of biological role, f(1)F(0) ATP synthase produces ATP from ADP in the presence of a proton or sodium gradient. F-type ATPases consist of two structural domains, F(1) containing the extramembraneous catalytic core and F(0) containing the membrane proton channel, linked together by a central stalk and a peripheral stalk. During catalysis, ATP synthesis in the catalytic domain of F(1) is coupled via a rotary mechanism of the central stalk subunits to proton translocation. Functionally, component of the F(0) channel, it forms part of the peripheral stalk, linking F(1) to F(0). The chain is ATP synthase subunit b from Prochlorococcus marinus (strain MIT 9515).